The primary structure comprises 340 residues: Heat-inducible transcription repressor HrcA (340 aa).

This sequence belongs to the HrcA family.

Its function is as follows. Negative regulator of class I heat shock genes (grpE-dnaK-dnaJ and groELS operons). Prevents heat-shock induction of these operons. The polypeptide is Heat-inducible transcription repressor HrcA (Mycoplasma capricolum subsp. capricolum (strain California kid / ATCC 27343 / NCTC 10154)).